A 275-amino-acid polypeptide reads, in one-letter code: MTRQFGLIGHPLGHSKSPVMHEAAYKDMGLDAVYCAYDISPQELGNAIRTMKAQGIDGFNVTIPHKVAIIDYLDEIDEDAEAMGAVNTVVCQDGRWVGKNTDADGYIESLLPVVSDQSLTGRRVLVIGAGGAARAVIHALGKQRATISVSNRTAEKAQELAQLFSHLTIEAIPLNEAESTLGTYDVLINTTSVGMYPDTSKQPIALDRLKQATIVSDLIYNPYETALLQEAKQRGNRILNGIGMFVNQGALSIEHWTGRKPNRKCMERVVRMHLT.

Shikimate-binding positions include 15-17 (SKS) and Thr62. Lys66 functions as the Proton acceptor in the catalytic mechanism. An NADP(+)-binding site is contributed by Glu78. Shikimate-binding residues include Asn87 and Asp102. NADP(+) is bound by residues 128–132 (GAGGA), 151–156 (NRTAEK), and Leu218. Residue Tyr220 coordinates shikimate. NADP(+) is bound at residue Gly241.

Belongs to the shikimate dehydrogenase family. Homodimer.

It carries out the reaction shikimate + NADP(+) = 3-dehydroshikimate + NADPH + H(+). Its pathway is metabolic intermediate biosynthesis; chorismate biosynthesis; chorismate from D-erythrose 4-phosphate and phosphoenolpyruvate: step 4/7. Functionally, involved in the biosynthesis of the chorismate, which leads to the biosynthesis of aromatic amino acids. Catalyzes the reversible NADPH linked reduction of 3-dehydroshikimate (DHSA) to yield shikimate (SA). The sequence is that of Shikimate dehydrogenase (NADP(+)) from Shouchella clausii (strain KSM-K16) (Alkalihalobacillus clausii).